Consider the following 455-residue polypeptide: NADH-quinone oxidoreductase subunit N (455 aa).

11 helical membrane-spanning segments follow: residues alanine 25–tyrosine 45, phenylalanine 61–histidine 81, valine 99–leucine 119, phenylalanine 149–alanine 169, isoleucine 193–phenylalanine 213, isoleucine 257–leucine 277, methionine 285–serine 305, leucine 312–valine 332, alanine 355–phenylalanine 375, isoleucine 391–isoleucine 411, and isoleucine 432–leucine 452.

The protein belongs to the complex I subunit 2 family. As to quaternary structure, NDH-1 is composed of 14 different subunits. Subunits NuoA, H, J, K, L, M, N constitute the membrane sector of the complex.

It localises to the cell inner membrane. The enzyme catalyses a quinone + NADH + 5 H(+)(in) = a quinol + NAD(+) + 4 H(+)(out). In terms of biological role, NDH-1 shuttles electrons from NADH, via FMN and iron-sulfur (Fe-S) centers, to quinones in the respiratory chain. The immediate electron acceptor for the enzyme in this species is believed to be a menaquinone. Couples the redox reaction to proton translocation (for every two electrons transferred, four hydrogen ions are translocated across the cytoplasmic membrane), and thus conserves the redox energy in a proton gradient. The chain is NADH-quinone oxidoreductase subunit N from Flavobacterium psychrophilum (strain ATCC 49511 / DSM 21280 / CIP 103535 / JIP02/86).